The sequence spans 187 residues: Cell division protein SepF (187 aa).

It belongs to the SepF family. As to quaternary structure, homodimer. Interacts with FtsZ.

The protein localises to the cytoplasm. In terms of biological role, cell division protein that is part of the divisome complex and is recruited early to the Z-ring. Probably stimulates Z-ring formation, perhaps through the cross-linking of FtsZ protofilaments. Its function overlaps with FtsA. This chain is Cell division protein SepF, found in Streptococcus suis (strain 98HAH33).